We begin with the raw amino-acid sequence, 333 residues long: Altered inheritance of mitochondria protein 23, mitochondrial (333 aa).

A mitochondrion-targeting transit peptide spans 1–28; that stretch reads MFRQIPKFSVIRASCFASRCFYSSKSSN. Disordered regions lie at residues 43-80 and 296-333; these read TNRSKKPRLKSRNDPKPSFKGAKAKKPDRHINQTGKER and QPKKDDKDEKKRLKELKKQERQEKIRLRTEKKRAESKA. Basic and acidic residues-rich tracts occupy residues 71 to 80 and 297 to 333; these read RHINQTGKER and PKKDDKDEKKRLKELKKQERQEKIRLRTEKKRAESKA.

Belongs to the AIM23 family.

It localises to the mitochondrion. This is Altered inheritance of mitochondria protein 23, mitochondrial (AIM23) from Komagataella phaffii (strain GS115 / ATCC 20864) (Yeast).